Reading from the N-terminus, the 281-residue chain is tRNA uridine(34) hydroxylase (281 aa).

In terms of domain architecture, Rhodanese spans 121 to 214 (SQPDVLVIDT…YLEKTHNKSG (94 aa)). The Cysteine persulfide intermediate role is filled by Cys174.

The protein belongs to the TrhO family.

The catalysed reaction is uridine(34) in tRNA + AH2 + O2 = 5-hydroxyuridine(34) in tRNA + A + H2O. Catalyzes oxygen-dependent 5-hydroxyuridine (ho5U) modification at position 34 in tRNAs. This chain is tRNA uridine(34) hydroxylase, found in Wolbachia pipientis subsp. Culex pipiens (strain wPip).